We begin with the raw amino-acid sequence, 473 residues long: Thermostable beta-glucosidase B (473 aa).

Residue E196 is the Proton donor of the active site. E378 functions as the Nucleophile in the catalytic mechanism.

This sequence belongs to the glycosyl hydrolase 1 family.

It localises to the cytoplasm. It catalyses the reaction Hydrolysis of terminal, non-reducing beta-D-glucosyl residues with release of beta-D-glucose.. In Thermobispora bispora (Microbispora bispora), this protein is Thermostable beta-glucosidase B (bglB).